Consider the following 233-residue polypeptide: Tapetum-specific methyltransferase 1 (233 aa).

Lys-8 lines the substrate pocket. Residues Val-52, Glu-74, 76-77 (GV), Ser-82, Asp-100, and Ala-129 each bind S-adenosyl-L-methionine. Position 150 (Asp-150) interacts with substrate. Asp-150 is an a divalent metal cation binding site. S-adenosyl-L-methionine is bound at residue Asp-152. The a divalent metal cation site is built by Asp-176 and Asn-177.

It belongs to the class I-like SAM-binding methyltransferase superfamily. Cation-dependent O-methyltransferase family. CCoAMT subfamily. Requires a divalent metal cation as cofactor. In terms of tissue distribution, expressed in inflorescences and flower buds. Not detected in roots, leaves or stems. Located exclusively in the tapetum of developing stamen.

The protein operates within aromatic compound metabolism; phenylpropanoid biosynthesis. Its function is as follows. Methyltransferase involved in phenylpropanoid polyamine conjugate biosynthesis. In vivo, methylates only one of the 5-hydroxyferuloyl moieties of N1,N5,N10-tri-(hydroxyferuloyl)-spermidine, while is able in vitro to convert all three 5-hydroxyferuloyl residues to the corresponding sinapoyl moieties and to methylate caffeoyl CoA and tricaffeoyl spermidine. This Arabidopsis thaliana (Mouse-ear cress) protein is Tapetum-specific methyltransferase 1 (TSM1).